The chain runs to 285 residues: 2-dehydro-3-deoxyphosphooctonate aldolase (285 aa).

Belongs to the KdsA family.

Its subcellular location is the cytoplasm. The enzyme catalyses D-arabinose 5-phosphate + phosphoenolpyruvate + H2O = 3-deoxy-alpha-D-manno-2-octulosonate-8-phosphate + phosphate. The protein operates within carbohydrate biosynthesis; 3-deoxy-D-manno-octulosonate biosynthesis; 3-deoxy-D-manno-octulosonate from D-ribulose 5-phosphate: step 2/3. It functions in the pathway bacterial outer membrane biogenesis; lipopolysaccharide biosynthesis. The chain is 2-dehydro-3-deoxyphosphooctonate aldolase from Acinetobacter baylyi (strain ATCC 33305 / BD413 / ADP1).